Consider the following 245-residue polypeptide: Probable phosphatase YcdX (245 aa).

Residues His7, His9, His15, His40, Glu73, His101, His131, Asp192, and His194 each contribute to the Zn(2+) site.

It belongs to the PHP family. Homotrimer. Zn(2+) is required as a cofactor.

This Escherichia fergusonii (strain ATCC 35469 / DSM 13698 / CCUG 18766 / IAM 14443 / JCM 21226 / LMG 7866 / NBRC 102419 / NCTC 12128 / CDC 0568-73) protein is Probable phosphatase YcdX.